A 172-amino-acid chain; its full sequence is Dual-action ribosomal maturation protein DarP (172 aa).

Belongs to the DarP family.

It localises to the cytoplasm. Its function is as follows. Member of a network of 50S ribosomal subunit biogenesis factors which assembles along the 30S-50S interface, preventing incorrect 23S rRNA structures from forming. Promotes peptidyl transferase center (PTC) maturation. The sequence is that of Dual-action ribosomal maturation protein DarP from Azotobacter vinelandii (strain DJ / ATCC BAA-1303).